We begin with the raw amino-acid sequence, 1274 residues long: Myosin-1 (1274 aa).

A disordered region spans residues 1 to 28 (MAPSKKAGKKGAVGGFLSGASKPQKVQK). The Myosin motor domain maps to 41-721 (AGVPDMTLLS…TLFYLEGERD (681 aa)). 134–141 (GESGAGKT) provides a ligand contact to ATP. Serine 363 bears the Phosphoserine mark. The tract at residues 410-492 (VIGVLDIYGF…AGIFATLNDA (83 aa)) is actin-binding. IQ domains lie at 725–745 (HTMA…KHEA) and 746–771 (ATKI…YGHQ). Residues 779 to 969 (RRRFSLLGMR…TIQVGSGEPP (191 aa)) form the TH1 domain. Disordered regions lie at residues 951–1029 (RGDA…PVVT), 1042–1071 (ARAP…PKEF), and 1116–1248 (PSNY…QVAQ). The span at 957 to 974 (KSHTIQVGSGEPPNSLSN) shows a compositional bias: polar residues. Residues 1042–1053 (ARAPPSIPGRAA) show a composition bias toward low complexity. Pro residues-rich tracts occupy residues 1054-1067 (APPP…PAGP) and 1126-1138 (APPP…PPSR). The region spanning 1067–1125 (PPKEFYKALYNFTGQEGEMNLVKGEEVEVKEKDDNGWWMVVKNGQEGWAPSNYLKKVEQ) is the SH3 domain. 2 stretches are compositionally biased toward low complexity: residues 1139 to 1157 (PVAA…PAVT) and 1170 to 1226 (AASA…IGGK).

This sequence belongs to the TRAFAC class myosin-kinesin ATPase superfamily. Myosin family. In terms of processing, phosphorylation of the TEDS site (Ser-363) is required for the polarization of the actin cytoskeleton. Phosphorylation probably activates the myosin-I ATPase activity.

The protein resides in the cytoplasm. The protein localises to the cytoskeleton. It is found in the actin patch. In terms of biological role, type-I myosin implicated in the organization of the actin cytoskeleton. Required for proper actin cytoskeleton polarization. At the cell cortex, assembles in patch-like structures together with proteins from the actin-polymerizing machinery and promotes actin assembly. Functions as actin nucleation-promoting factor (NPF) for the Arp2/3 complex. This is Myosin-1 (MYO1) from Cryptococcus neoformans var. neoformans serotype D (strain B-3501A) (Filobasidiella neoformans).